We begin with the raw amino-acid sequence, 621 residues long: Chaperone protein HscA homolog (621 aa).

The protein belongs to the heat shock protein 70 family.

Its function is as follows. Chaperone involved in the maturation of iron-sulfur cluster-containing proteins. Has a low intrinsic ATPase activity which is markedly stimulated by HscB. The polypeptide is Chaperone protein HscA homolog (Polynucleobacter asymbioticus (strain DSM 18221 / CIP 109841 / QLW-P1DMWA-1) (Polynucleobacter necessarius subsp. asymbioticus)).